A 264-amino-acid chain; its full sequence is Matrilysin (264 aa).

The first 17 residues, 1–17 (MQLTLFCFVCLLPGHLA), serve as a signal peptide directing secretion. A propeptide spans 18-94 (LPLSQEAGDV…PRCGVPDVAE (77 aa)) (activation peptide). Residues 85-92 (PRCGVPDV) carry the Cysteine switch motif. Cys-87 contributes to the Zn(2+) binding site. Residue Asp-153 coordinates Ca(2+). Positions 163 and 165 each coordinate Zn(2+). The Ca(2+) site is built by Asp-170, Gly-171, Gly-173, and Thr-175. His-178 serves as a coordination point for Zn(2+). Positions 185, 187, and 189 each coordinate Ca(2+). Residue His-191 participates in Zn(2+) binding. Residues Asp-193 and Glu-196 each contribute to the Ca(2+) site. Residue His-214 participates in Zn(2+) binding. The active site involves Glu-215. The Zn(2+) site is built by His-218 and His-224.

It belongs to the peptidase M10A family. Requires Ca(2+) as cofactor. The cofactor is Zn(2+). In terms of tissue distribution, expressed in the intestinal epithelium (at protein level).

It is found in the secreted. The protein resides in the extracellular space. It localises to the extracellular matrix. The enzyme catalyses Cleavage of 14-Ala-|-Leu-15 and 16-Tyr-|-Leu-17 in B chain of insulin. No action on collagen types I, II, IV, V. Cleaves gelatin chain alpha2(I) &gt; alpha1(I).. In terms of biological role, degrades casein, gelatins of types I, III, IV, and V, and fibronectin. Activates procollagenase. Its function is as follows. May play a role in tissue reorganization. The sequence is that of Matrilysin (Mmp7) from Mus musculus (Mouse).